A 300-amino-acid polypeptide reads, in one-letter code: tRNA U34 carboxymethyltransferase (300 aa).

Residues Lys-73, Trp-87, Lys-92, Gly-111, 133–135 (DPS), 160–161 (VE), Tyr-180, and Arg-293 each bind carboxy-S-adenosyl-L-methionine.

The protein belongs to the class I-like SAM-binding methyltransferase superfamily. CmoB family. As to quaternary structure, homotetramer.

It catalyses the reaction carboxy-S-adenosyl-L-methionine + 5-hydroxyuridine(34) in tRNA = 5-carboxymethoxyuridine(34) in tRNA + S-adenosyl-L-homocysteine + H(+). Its function is as follows. Catalyzes carboxymethyl transfer from carboxy-S-adenosyl-L-methionine (Cx-SAM) to 5-hydroxyuridine (ho5U) to form 5-carboxymethoxyuridine (cmo5U) at position 34 in tRNAs. This Nautilia profundicola (strain ATCC BAA-1463 / DSM 18972 / AmH) protein is tRNA U34 carboxymethyltransferase.